Consider the following 251-residue polypeptide: Hydroxyacylglutathione hydrolase (251 aa).

Zn(2+) is bound by residues His-55, His-57, Asp-59, His-60, His-112, Asp-131, and His-169.

This sequence belongs to the metallo-beta-lactamase superfamily. Glyoxalase II family. Monomer. Zn(2+) is required as a cofactor.

It catalyses the reaction an S-(2-hydroxyacyl)glutathione + H2O = a 2-hydroxy carboxylate + glutathione + H(+). It functions in the pathway secondary metabolite metabolism; methylglyoxal degradation; (R)-lactate from methylglyoxal: step 2/2. Its function is as follows. Thiolesterase that catalyzes the hydrolysis of S-D-lactoyl-glutathione to form glutathione and D-lactic acid. This Erythrobacter litoralis (strain HTCC2594) protein is Hydroxyacylglutathione hydrolase.